We begin with the raw amino-acid sequence, 236 residues long: NLP effector protein 3 (236 aa).

A signal peptide spans 1–19; the sequence is MNLLGFLAVVALSTASVQA. A Conserved undecapeptide motif I motif is present at residues 103 to 113; sequence AIMYSWYFPKD. A Hepta-peptide GHRHDWE motif II motif is present at residues 120–126; it reads GHRHDWE.

This sequence belongs to the Necrosis inducing protein (NPP1) family.

It localises to the secreted. In terms of biological role, secreted effector that contributes to virulence during infection by P.capsici. Induces distinct chlorosis at 3 days after inoculation of host C.annuum leaves, and all the chlorotic areas gradually turn brown and become moderately necrotic at 7 days after inoculation. Leads only to chlorotic areas, without necrosis at 7 days after non-host N.benthamiana leaves infection. Induces cell death in hot pepper. The protein is NLP effector protein 3 of Phytophthora capsici.